A 100-amino-acid chain; its full sequence is Small ribosomal subunit protein uS14c (100 aa).

This sequence belongs to the universal ribosomal protein uS14 family. Part of the 30S ribosomal subunit.

It is found in the plastid. It localises to the chloroplast. In terms of biological role, binds 16S rRNA, required for the assembly of 30S particles. The protein is Small ribosomal subunit protein uS14c of Guillardia theta (Cryptophyte).